The primary structure comprises 80 residues: Small ribosomal subunit protein bS18A (80 aa).

This sequence belongs to the bacterial ribosomal protein bS18 family. In terms of assembly, part of the 30S ribosomal subunit. Forms a tight heterodimer with protein bS6.

In terms of biological role, binds as a heterodimer with protein bS6 to the central domain of the 16S rRNA, where it helps stabilize the platform of the 30S subunit. This chain is Small ribosomal subunit protein bS18A, found in Rhodococcus jostii (strain RHA1).